The primary structure comprises 119 residues: Large ribosomal subunit protein bL20 (119 aa).

This sequence belongs to the bacterial ribosomal protein bL20 family.

Binds directly to 23S ribosomal RNA and is necessary for the in vitro assembly process of the 50S ribosomal subunit. It is not involved in the protein synthesizing functions of that subunit. This Mycoplasma capricolum subsp. capricolum (strain California kid / ATCC 27343 / NCTC 10154) protein is Large ribosomal subunit protein bL20.